A 139-amino-acid polypeptide reads, in one-letter code: MPRGVYLGFDFGYKRIGVAVGQRLTCSASPLSTIEAKAGIPDWNTIQKVITQWNPQALIVGLPTCIDDRELYTTSAARRFAKQLHKQFSLPVHLVDERLSTVEARGYLFEQGGYRQIKKAEVDSIAACVILEQWLQQSE.

This sequence belongs to the YqgF nuclease family.

It localises to the cytoplasm. Functionally, could be a nuclease involved in processing of the 5'-end of pre-16S rRNA. This Legionella pneumophila (strain Lens) protein is Putative pre-16S rRNA nuclease.